A 233-amino-acid chain; its full sequence is ATP synthase subunit a, chloroplastic (233 aa).

A run of 4 helical transmembrane segments spans residues 27–47, 84–104, 122–142, and 192–212; these read VLLI…LGTL, VPFV…GALI, DINT…YAGF, and VLCL…GIFA.

Belongs to the ATPase A chain family. In terms of assembly, F-type ATPases have 2 components, CF(1) - the catalytic core - and CF(0) - the membrane proton channel. CF(1) has five subunits: alpha(3), beta(3), gamma(1), delta(1), epsilon(1). CF(0) has four main subunits: a, b, b' and c.

The protein resides in the plastid. It is found in the chloroplast thylakoid membrane. Its function is as follows. Key component of the proton channel; it plays a direct role in the translocation of protons across the membrane. This is ATP synthase subunit a, chloroplastic from Ochrosphaera neapolitana.